We begin with the raw amino-acid sequence, 499 residues long: Cytochrome P450 monooxygenase ausI (499 aa).

The chain crosses the membrane as a helical span at residues 10–30 (PLGQPLIAGFVVVSAVLYLLY). Residue Cys439 participates in heme binding. N-linked (GlcNAc...) asparagine glycosylation is present at Asn483.

Belongs to the cytochrome P450 family. It depends on heme as a cofactor.

The protein localises to the membrane. It participates in secondary metabolite biosynthesis; terpenoid biosynthesis. Cytochrome P450 monooxygenase; part of the gene cluster B that mediates the biosynthesis of austinol and dehydroaustinol, two fungal meroterpenoids. The first step of the pathway is the synthesis of 3,5-dimethylorsellinic acid by the polyketide synthase ausA. 3,5-dimethylorsellinic acid is then prenylated by the polyprenyl transferase ausN. Further epoxidation by the FAD-dependent monooxygenase ausM and cyclization by the probable terpene cyclase ausL lead to the formation of protoaustinoid A. Protoaustinoid A is then oxidized to spiro-lactone preaustinoid A3 by the combined action of the FAD-binding monooxygenases ausB and ausC, and the dioxygenase ausE. Acid-catalyzed keto-rearrangement and ring contraction of the tetraketide portion of preaustinoid A3 by ausJ lead to the formation of preaustinoid A4. The aldo-keto reductase ausK, with the help of ausH, is involved in the next step by transforming preaustinoid A4 into isoaustinone which is in turn hydroxylated by the P450 monooxygenase ausI to form austinolide. Finally, the cytochrome P450 monooxygenase ausG modifies austinolide to austinol. Austinol can be further modified to dehydroaustinol which forms a diffusible complex with diorcinol that initiates conidiation. Due to genetic rearrangements of the clusters and the subsequent loss of some enzymes, the end products of the Emericella nidulans austinoid biosynthesis clusters are austinol and dehydroaustinol, even if additional enzymes, such as the O-acetyltransferase ausQ and the cytochrome P450 monooxygenase ausR are still functional. This chain is Cytochrome P450 monooxygenase ausI, found in Emericella nidulans (strain FGSC A4 / ATCC 38163 / CBS 112.46 / NRRL 194 / M139) (Aspergillus nidulans).